Here is a 339-residue protein sequence, read N- to C-terminus: UDP-3-O-acylglucosamine N-acyltransferase (339 aa).

H239 (proton acceptor) is an active-site residue.

This sequence belongs to the transferase hexapeptide repeat family. LpxD subfamily. In terms of assembly, homotrimer.

The catalysed reaction is a UDP-3-O-[(3R)-3-hydroxyacyl]-alpha-D-glucosamine + a (3R)-hydroxyacyl-[ACP] = a UDP-2-N,3-O-bis[(3R)-3-hydroxyacyl]-alpha-D-glucosamine + holo-[ACP] + H(+). The protein operates within bacterial outer membrane biogenesis; LPS lipid A biosynthesis. Its function is as follows. Catalyzes the N-acylation of UDP-3-O-acylglucosamine using 3-hydroxyacyl-ACP as the acyl donor. Is involved in the biosynthesis of lipid A, a phosphorylated glycolipid that anchors the lipopolysaccharide to the outer membrane of the cell. The protein is UDP-3-O-acylglucosamine N-acyltransferase of Aliivibrio fischeri (strain ATCC 700601 / ES114) (Vibrio fischeri).